The primary structure comprises 322 residues: Cyclin mcs2 (322 aa).

Residue S310 is modified to Phosphoserine.

This sequence belongs to the cyclin family. Cyclin C subfamily. As to quaternary structure, one of the nine subunits forming the core-TFIIH basal transcription factor. Interacts with crk1 and skp1.

The protein localises to the nucleus. In terms of biological role, essential for progression through the cell cycle. Possesses kinase activity that can be detected when myelin basic protein (MBP) is provided as an exogenous substrate. The polypeptide is Cyclin mcs2 (mcs2) (Schizosaccharomyces pombe (strain 972 / ATCC 24843) (Fission yeast)).